The chain runs to 313 residues: NADH-ubiquinone oxidoreductase chain 1 (313 aa).

Helical transmembrane passes span 5-25 (LFMFVLNFLLLIICVLISVAF), 75-95 (FLYYFSPVFNLMLSLLIWVIF), 104-124 (FPYGFYFLCCTSLSVYTFMIA), 151-171 (LALILLSLIILIGSFNMLYFM), 175-195 (LYCWFIVFSFPLALSFFGSSL), 227-247 (LIFLAEYSSIIFMSMLFSLIF), 251-271 (DFYSFYFFFKLSLVSFFFVWV), and 293-313 (PLSLNFLFFFIGLSVMFFSII).

The protein belongs to the complex I subunit 1 family.

It is found in the mitochondrion inner membrane. It carries out the reaction a ubiquinone + NADH + 5 H(+)(in) = a ubiquinol + NAD(+) + 4 H(+)(out). Its function is as follows. Core subunit of the mitochondrial membrane respiratory chain NADH dehydrogenase (Complex I) that is believed to belong to the minimal assembly required for catalysis. Complex I functions in the transfer of electrons from NADH to the respiratory chain. The immediate electron acceptor for the enzyme is believed to be ubiquinone. In Locusta migratoria (Migratory locust), this protein is NADH-ubiquinone oxidoreductase chain 1 (ND1).